Reading from the N-terminus, the 108-residue chain is Long neurotoxin 13 (108 aa).

A signal peptide spans 1 to 21; it reads MKTLLLTLVVVTIVCLDLAYT. Intrachain disulfides connect Cys24-Cys42, Cys35-Cys63, Cys48-Cys52, Cys67-Cys78, and Cys79-Cys84.

This sequence belongs to the three-finger toxin family. Long-chain subfamily. Type II alpha-neurotoxin sub-subfamily. Expressed by the venom gland.

The protein resides in the secreted. In terms of biological role, binds with high affinity to muscular (alpha-1/CHRNA1) and neuronal (alpha-7/CHRNA7) nicotinic acetylcholine receptor (nAChR) and inhibits acetylcholine from binding to the receptor, thereby impairing neuromuscular and neuronal transmission. This chain is Long neurotoxin 13, found in Drysdalia coronoides (White-lipped snake).